A 131-amino-acid chain; its full sequence is MRHRKSGRQLNRNSSHRQAMFRNMASSLVRHEIIKTTAVKAKELRRVVEPLITLAKSDSVANRRLAFARTRDQEVVGKLFNELGPRYQERPGGYTRILKCGLRAGDKAPMAYIELVGRPEAAQAVEVEAAE.

Belongs to the bacterial ribosomal protein bL17 family. In terms of assembly, part of the 50S ribosomal subunit. Contacts protein L32.

The chain is Large ribosomal subunit protein bL17 from Shewanella amazonensis (strain ATCC BAA-1098 / SB2B).